The chain runs to 245 residues: 5-oxoprolinase subunit A (245 aa).

The protein belongs to the LamB/PxpA family. As to quaternary structure, forms a complex composed of PxpA, PxpB and PxpC.

The enzyme catalyses 5-oxo-L-proline + ATP + 2 H2O = L-glutamate + ADP + phosphate + H(+). Its function is as follows. Catalyzes the cleavage of 5-oxoproline to form L-glutamate coupled to the hydrolysis of ATP to ADP and inorganic phosphate. The protein is 5-oxoprolinase subunit A of Yersinia pseudotuberculosis serotype O:1b (strain IP 31758).